The chain runs to 172 residues: uncharacterized protein (172 aa).

It belongs to the flavoredoxin family. FMN is required as a cofactor.

This is an uncharacterized protein from Pyrococcus abyssi (strain GE5 / Orsay).